Consider the following 235-residue polypeptide: Small ribosomal subunit protein uS3 (235 aa).

A KH type-2 domain is found at 39–107 (VRKFLNKELA…PAQINIAEVK (69 aa)).

Belongs to the universal ribosomal protein uS3 family. As to quaternary structure, part of the 30S ribosomal subunit. Forms a tight complex with proteins S10 and S14.

Binds the lower part of the 30S subunit head. Binds mRNA in the 70S ribosome, positioning it for translation. The polypeptide is Small ribosomal subunit protein uS3 (Actinobacillus pleuropneumoniae serotype 5b (strain L20)).